The chain runs to 366 residues: Isopentenyl-diphosphate delta-isomerase (366 aa).

6–7 (RK) serves as a coordination point for substrate. FMN contacts are provided by residues T63, 64–66 (GMT), S94, and N123. 94-96 (SQR) contributes to the substrate binding site. Position 158 (Q158) interacts with substrate. Position 159 (E159) interacts with Mg(2+). FMN-binding positions include K191, S216, T221, 273-275 (GIR), and 294-295 (AN).

This sequence belongs to the IPP isomerase type 2 family. In terms of assembly, homooctamer. Dimer of tetramers. It depends on FMN as a cofactor. NADPH serves as cofactor. Requires Mg(2+) as cofactor.

The protein localises to the cytoplasm. The enzyme catalyses isopentenyl diphosphate = dimethylallyl diphosphate. Its function is as follows. Involved in the biosynthesis of isoprenoids. Catalyzes the 1,3-allylic rearrangement of the homoallylic substrate isopentenyl (IPP) to its allylic isomer, dimethylallyl diphosphate (DMAPP). This is Isopentenyl-diphosphate delta-isomerase from Metallosphaera sedula (strain ATCC 51363 / DSM 5348 / JCM 9185 / NBRC 15509 / TH2).